We begin with the raw amino-acid sequence, 482 residues long: ATP synthase subunit beta (482 aa).

Residue 161 to 168 participates in ATP binding; the sequence is GGAGVGKT.

The protein belongs to the ATPase alpha/beta chains family. In terms of assembly, F-type ATPases have 2 components, CF(1) - the catalytic core - and CF(0) - the membrane proton channel. CF(1) has five subunits: alpha(3), beta(3), gamma(1), delta(1), epsilon(1). CF(0) has four main subunits: a(1), b(1), b'(1) and c(9-12).

The protein resides in the cellular thylakoid membrane. The enzyme catalyses ATP + H2O + 4 H(+)(in) = ADP + phosphate + 5 H(+)(out). In terms of biological role, produces ATP from ADP in the presence of a proton gradient across the membrane. The catalytic sites are hosted primarily by the beta subunits. The polypeptide is ATP synthase subunit beta (Gloeothece citriformis (strain PCC 7424) (Cyanothece sp. (strain PCC 7424))).